Consider the following 395-residue polypeptide: Elongation factor Tu (395 aa).

Residues 10-204 enclose the tr-type G domain; that stretch reads KPHVNIGTIG…AIDNWIPLPQ (195 aa). The interval 19–26 is G1; sequence GHVDHGKT. 19–26 provides a ligand contact to GTP; the sequence is GHVDHGKT. Thr-26 provides a ligand contact to Mg(2+). The tract at residues 60–64 is G2; the sequence is GITIN. Residues 81 to 84 are G3; sequence DCPG. Residues 81 to 85 and 136 to 139 each bind GTP; these read DCPGH and NKVD. The segment at 136-139 is G4; the sequence is NKVD. The G5 stretch occupies residues 174–176; it reads SAL.

The protein belongs to the TRAFAC class translation factor GTPase superfamily. Classic translation factor GTPase family. EF-Tu/EF-1A subfamily. Monomer.

It localises to the cytoplasm. The catalysed reaction is GTP + H2O = GDP + phosphate + H(+). In terms of biological role, GTP hydrolase that promotes the GTP-dependent binding of aminoacyl-tRNA to the A-site of ribosomes during protein biosynthesis. The protein is Elongation factor Tu of Azobacteroides pseudotrichonymphae genomovar. CFP2.